Consider the following 177-residue polypeptide: Large ribosomal subunit protein uL6 (177 aa).

Belongs to the universal ribosomal protein uL6 family. As to quaternary structure, part of the 50S ribosomal subunit.

Its function is as follows. This protein binds to the 23S rRNA, and is important in its secondary structure. It is located near the subunit interface in the base of the L7/L12 stalk, and near the tRNA binding site of the peptidyltransferase center. The polypeptide is Large ribosomal subunit protein uL6 (Rickettsia akari (strain Hartford)).